Here is a 414-residue protein sequence, read N- to C-terminus: DNA polymerase IV (414 aa).

The UmuC domain maps to 8 to 189 (IFHIDMNSFY…LPIEEMHGIG (182 aa)). Mg(2+) is bound by residues Asp12 and Asp108. Glu109 is a catalytic residue. A disordered region spans residues 394-414 (EESKTRGTSFNRDFFQDEKKR).

This sequence belongs to the DNA polymerase type-Y family. As to quaternary structure, monomer. It depends on Mg(2+) as a cofactor.

The protein localises to the cytoplasm. It catalyses the reaction DNA(n) + a 2'-deoxyribonucleoside 5'-triphosphate = DNA(n+1) + diphosphate. Poorly processive, error-prone DNA polymerase involved in untargeted mutagenesis. Copies undamaged DNA at stalled replication forks, which arise in vivo from mismatched or misaligned primer ends. These misaligned primers can be extended by PolIV. Exhibits no 3'-5' exonuclease (proofreading) activity. May be involved in translesional synthesis, in conjunction with the beta clamp from PolIII. This is DNA polymerase IV from Bacillus velezensis (strain DSM 23117 / BGSC 10A6 / LMG 26770 / FZB42) (Bacillus amyloliquefaciens subsp. plantarum).